The chain runs to 159 residues: Phosphopantetheine adenylyltransferase (159 aa).

Threonine 9 provides a ligand contact to substrate. Residues 9 to 10 (TF) and histidine 17 each bind ATP. Positions 41, 73, and 87 each coordinate substrate. ATP contacts are provided by residues 88–90 (GLR), glutamate 98, and 123–129 (YAFLSST).

It belongs to the bacterial CoaD family. Homohexamer. The cofactor is Mg(2+).

It localises to the cytoplasm. The enzyme catalyses (R)-4'-phosphopantetheine + ATP + H(+) = 3'-dephospho-CoA + diphosphate. It participates in cofactor biosynthesis; coenzyme A biosynthesis; CoA from (R)-pantothenate: step 4/5. In terms of biological role, reversibly transfers an adenylyl group from ATP to 4'-phosphopantetheine, yielding dephospho-CoA (dPCoA) and pyrophosphate. This Vibrio campbellii (strain ATCC BAA-1116) protein is Phosphopantetheine adenylyltransferase.